We begin with the raw amino-acid sequence, 881 residues long: MSGVNEIRSSFIDYFVKNGHEAVASSPLVPRNDPTLMFTNAGMVQFKNVFTGVEKRPYSRAVTAQKCVRAGGKHNDLDNVGYTARHHTFFEMLGNFSFGDYFKDRAIELAWNLITKEWDLPKDRLLATVYYDDDVAYDLWKKVAGLPDSRIIRIPTSDNFWAMGDTGPCGPCSEIFFDHGDHIPGGPPGSPDEDGDRFIEIWNLVFMQYEQLPGERLNLPRPSIDTGMGLERISALLQGTHDNYETDLMRAIIAEVQELTNVPSNGPQKASHRVIADHLRSSVFLVADGVLPSNEGRGYVLRRIMRRAMRHAQLLGAREPLMHRLVPVLVREMGRAYPEIVRAEALATETLLLEETRFRRTLERGLSLLEEESAGLVSGARFPGEVAFKLYDTYGFPLDLTEDALRGRGIEVEREAFDAAMERQKAEARANWSGSGEAATDTVWFGVREREGATEFLGYDTETAEGAVRALVQEGKEVSELPAGARGFVVLNQTPFYGESGGQVGDSGLVSGEGVKACVLNTQKKLGDVFVHDVEVTEGTLKIGTPLALEVDHARRSAVRANHSATHLLHEALRRVLGDHVAQKGSLVAPDRLRFDFSHPKPLTADELAQVEDIANTYVLRNEPVETRLMAVDDAVASGARALFGEKYGDEVRVVSMGTDSGNGAPFSVELCGGTHVKRTGDIGIVTVLADSGVAAGVRRLEALTATAARRHLNAASTALQTTAGTLKVSTAEVEARVAALVEERRKLERDLAEARKKLAMGGGGESGPAVIEVNGTRYLRIAISGADPKDLKAIVDEGKTKIGSGVVAVANTAADGKGALVVGVTADLAGKFDAQKLVRIGVEVLGGKGGGGRPDMAQGGGPDGAKADAALAAIESALGA.

Positions 563, 567, 672, and 676 each coordinate Zn(2+).

It belongs to the class-II aminoacyl-tRNA synthetase family. It depends on Zn(2+) as a cofactor.

It localises to the cytoplasm. It carries out the reaction tRNA(Ala) + L-alanine + ATP = L-alanyl-tRNA(Ala) + AMP + diphosphate. Its function is as follows. Catalyzes the attachment of alanine to tRNA(Ala) in a two-step reaction: alanine is first activated by ATP to form Ala-AMP and then transferred to the acceptor end of tRNA(Ala). Also edits incorrectly charged Ser-tRNA(Ala) and Gly-tRNA(Ala) via its editing domain. This is Alanine--tRNA ligase from Azorhizobium caulinodans (strain ATCC 43989 / DSM 5975 / JCM 20966 / LMG 6465 / NBRC 14845 / NCIMB 13405 / ORS 571).